The sequence spans 34 residues: Photosystem II reaction center protein Psb30 (34 aa).

Residues 6-26 form a helical membrane-spanning segment; sequence VIGQLVSTGAIMLLGPAIIIL.

It belongs to the Psb30/Ycf12 family. As to quaternary structure, PSII is composed of 1 copy each of membrane proteins PsbA, PsbB, PsbC, PsbD, PsbE, PsbF, PsbH, PsbI, PsbJ, PsbK, PsbL, PsbM, PsbT, PsbX, PsbY, PsbZ, Psb30/Ycf12, peripheral proteins of the oxygen-evolving complex and a large number of cofactors. It forms dimeric complexes.

The protein localises to the plastid. It is found in the chloroplast thylakoid membrane. In terms of biological role, a core subunit of photosystem II (PSII), probably helps stabilize the reaction center. This chain is Photosystem II reaction center protein Psb30, found in Thalassiosira pseudonana (Marine diatom).